Consider the following 276-residue polypeptide: Probable doxorubicin resistance ABC transporter permease protein DrrC (276 aa).

The next 6 membrane-spanning stretches (helical) occupy residues 46–66 (ITVI…NIVL), 82–102 (IVPL…AIDL), 129–149 (ILAN…TGVV), 159–179 (IPSL…AAMV), 190–210 (VVVE…TGLV), and 248–268 (MIGM…PLAI). In terms of domain architecture, ABC transmembrane type-2 spans 46-273 (ITVIGAIVLP…VPLAIGYRRA (228 aa)).

This sequence belongs to the ABC-2 integral membrane protein family. In terms of assembly, the complex is composed of two ATP-binding proteins (DrrA) and two transmembrane proteins (DrrB and DrrC).

The protein resides in the cell membrane. Its function is as follows. Probably part of the ABC transporter complex DrrABC involved in doxorubicin resistance. Probably responsible for the translocation of the substrate across the membrane. The sequence is that of Probable doxorubicin resistance ABC transporter permease protein DrrC (drrC) from Mycobacterium tuberculosis (strain CDC 1551 / Oshkosh).